A 564-amino-acid chain; its full sequence is Lamassu protein LmuB (564 aa).

Its function is as follows. Component of antiviral defense system Lamassu type II, composed of LmuA and LmuB. Expression of Lamassu type II in B.subtilis (strain BEST7003) confers resistance to phage SpBeta. May be an ATPase. The polypeptide is Lamassu protein LmuB (Bacillus cereus (strain VD014)).